The following is a 306-amino-acid chain: Probable rRNA-processing protein EBP2 (306 aa).

Residue Met-1 is modified to N-acetylmethionine. Disordered regions lie at residues 1 to 20 (MDTPPLSESDSESDACLASD), 75 to 103 (GPVPEVSETQPTPQNQDQKKGVNPEDDFQ), and 150 to 169 (IRQKLQTKQAAMEKSEKAKQ). Position 3 is a phosphothreonine (Thr-3). Phosphoserine is present on residues Ser-7, Ser-9, Ser-11, and Ser-13. Residues 81–90 (SETQPTPQNQ) are compositionally biased toward polar residues. A compositionally biased stretch (basic and acidic residues) spans 91–103 (DQKKGVNPEDDFQ). Residue Lys-93 forms a Glycyl lysine isopeptide (Lys-Gly) (interchain with G-Cter in SUMO2) linkage. Residues 135-171 (DYFAEMAKSDQQMQKIRQKLQTKQAAMEKSEKAKQLR) are a coiled coil. Glycyl lysine isopeptide (Lys-Gly) (interchain with G-Cter in SUMO2) cross-links involve residues Lys-179 and Lys-218. Residues 213-224 (LEGDQKPVERSA) show a composition bias toward basic and acidic residues. A disordered region spans residues 213–306 (LEGDQKPVER…ARQKLKSKAR (94 aa)). 2 positions are modified to phosphoserine: Ser-264 and Ser-270. Positions 274–306 (KVAHGKGSRRPGKKGANKRPGKRARQKLKSKAR) are enriched in basic residues.

It belongs to the EBP2 family. In terms of assembly, interacts with WDR46.

It localises to the nucleus. The protein localises to the nucleolus. Functionally, required for the processing of the 27S pre-rRNA. The chain is Probable rRNA-processing protein EBP2 (Ebna1bp2) from Mus musculus (Mouse).